The following is a 599-amino-acid chain: Elongation factor 4 (599 aa).

A tr-type G domain is found at 5-187; sequence SHIRNFSIIA…RLVAVIPPPT (183 aa). GTP is bound by residues 17–22 and 134–137; these read DHGKST and NKMD.

This sequence belongs to the TRAFAC class translation factor GTPase superfamily. Classic translation factor GTPase family. LepA subfamily.

Its subcellular location is the cell inner membrane. It catalyses the reaction GTP + H2O = GDP + phosphate + H(+). In terms of biological role, required for accurate and efficient protein synthesis under certain stress conditions. May act as a fidelity factor of the translation reaction, by catalyzing a one-codon backward translocation of tRNAs on improperly translocated ribosomes. Back-translocation proceeds from a post-translocation (POST) complex to a pre-translocation (PRE) complex, thus giving elongation factor G a second chance to translocate the tRNAs correctly. Binds to ribosomes in a GTP-dependent manner. The protein is Elongation factor 4 of Stutzerimonas stutzeri (strain A1501) (Pseudomonas stutzeri).